A 93-amino-acid polypeptide reads, in one-letter code: Large ribosomal subunit protein uL23cy (93 aa).

It belongs to the universal ribosomal protein uL23 family. In terms of assembly, part of the 50S ribosomal subunit.

The protein resides in the plastid. Its subcellular location is the chloroplast. Its function is as follows. Binds to 23S rRNA. The chain is Large ribosomal subunit protein uL23cy (rpl23-B) from Sorghum bicolor (Sorghum).